The primary structure comprises 490 residues: Glucose-6-phosphate 1-dehydrogenase (490 aa).

NADP(+) is bound by residues Arg-49, 91 to 92 (DV), and Lys-146. Positions 176, 180, 214, and 233 each coordinate substrate. Residue His-238 is the Proton acceptor of the active site. Lys-338 and Lys-343 together coordinate substrate.

This sequence belongs to the glucose-6-phosphate dehydrogenase family.

The enzyme catalyses D-glucose 6-phosphate + NADP(+) = 6-phospho-D-glucono-1,5-lactone + NADPH + H(+). It functions in the pathway carbohydrate degradation; pentose phosphate pathway; D-ribulose 5-phosphate from D-glucose 6-phosphate (oxidative stage): step 1/3. Functionally, catalyzes the oxidation of glucose 6-phosphate to 6-phosphogluconolactone. The sequence is that of Glucose-6-phosphate 1-dehydrogenase from Buchnera aphidicola subsp. Schizaphis graminum (strain Sg).